Consider the following 151-residue polypeptide: Ribosome maturation factor RimP (151 aa).

The protein belongs to the RimP family.

The protein resides in the cytoplasm. Required for maturation of 30S ribosomal subunits. In Aliivibrio fischeri (strain ATCC 700601 / ES114) (Vibrio fischeri), this protein is Ribosome maturation factor RimP.